We begin with the raw amino-acid sequence, 234 residues long: Triosephosphate isomerase (234 aa).

Position 8 to 10 (8 to 10) interacts with substrate; sequence NFK. Histidine 90 serves as the catalytic Electrophile. Glutamate 159 (proton acceptor) is an active-site residue. Substrate is bound by residues glycine 165 and serine 197.

It belongs to the triosephosphate isomerase family. Homodimer.

The protein localises to the cytoplasm. It carries out the reaction D-glyceraldehyde 3-phosphate = dihydroxyacetone phosphate. It participates in carbohydrate biosynthesis; gluconeogenesis. The protein operates within carbohydrate degradation; glycolysis; D-glyceraldehyde 3-phosphate from glycerone phosphate: step 1/1. Its function is as follows. Involved in the gluconeogenesis. Catalyzes stereospecifically the conversion of dihydroxyacetone phosphate (DHAP) to D-glyceraldehyde-3-phosphate (G3P). In Helicobacter pylori (strain G27), this protein is Triosephosphate isomerase.